The sequence spans 702 residues: Polyribonucleotide nucleotidyltransferase (702 aa).

Aspartate 485 and aspartate 491 together coordinate Mg(2+). A KH domain is found at 552-611 (PRITTLKINPEKIRDVIGKGGATIRALTEETGTTIELEDDGTVKIASANGEATKEAIRRI). Residues 621–689 (GTVYNGKVVR…RQGRVRLSMK (69 aa)) form the S1 motif domain.

The protein belongs to the polyribonucleotide nucleotidyltransferase family. Component of the RNA degradosome, which is a multiprotein complex involved in RNA processing and mRNA degradation. Mg(2+) is required as a cofactor.

It is found in the cytoplasm. The catalysed reaction is RNA(n+1) + phosphate = RNA(n) + a ribonucleoside 5'-diphosphate. Its function is as follows. Involved in mRNA degradation. Catalyzes the phosphorolysis of single-stranded polyribonucleotides processively in the 3'- to 5'-direction. This chain is Polyribonucleotide nucleotidyltransferase, found in Shewanella woodyi (strain ATCC 51908 / MS32).